A 176-amino-acid chain; its full sequence is Large ribosomal subunit protein uL30 (176 aa).

This sequence belongs to the universal ribosomal protein uL30 family. Part of the 50S ribosomal subunit.

The protein is Large ribosomal subunit protein uL30 of Pyrobaculum arsenaticum (strain DSM 13514 / JCM 11321 / PZ6).